Reading from the N-terminus, the 378-residue chain is Calponin homolog OV9M (378 aa).

The span at 1–20 (MPAQPAQENAQDADDAQANA) shows a compositional bias: low complexity. The disordered stretch occupies residues 1 to 35 (MPAQPAQENAQDADDAQANATMETRVAGQGQPKRV). 7 Calponin-like repeats span residues 50-75 (IPSQ…RNTQ), 98-123 (VRLQ…RDVC), 151-176 (VRLQ…RRET), 197-222 (IPLQ…RRET), 244-269 (IPSQ…RWEV), 285-310 (VRLQ…RNTT), and 330-355 (IPSQ…RDVK). Positions 175 to 194 (ETTKMTDSKHPDYDHERPDQ) are disordered. The segment at 230 to 256 (HPEYDPESSIDSSTIPSQMGSNKYASQ) is disordered. Over residues 238 to 256 (SIDSSTIPSQMGSNKYASQ) the composition is skewed to polar residues. A disordered region spans residues 331–352 (PSQAGWNRGDSQKGMTGFGAPR).

It belongs to the calponin family. In terms of tissue distribution, found in the longitudinal muscles below the hypodermis.

In terms of biological role, could be involved in muscle contraction. In Onchocerca volvulus, this protein is Calponin homolog OV9M.